The following is a 211-amino-acid chain: Uracil phosphoribosyltransferase (211 aa).

5-phospho-alpha-D-ribose 1-diphosphate is bound by residues R77, R102, and 129–137 (DPMLATGGS). Uracil-binding positions include I192 and 197 to 199 (GDA). A 5-phospho-alpha-D-ribose 1-diphosphate-binding site is contributed by D198.

The protein belongs to the UPRTase family. It depends on Mg(2+) as a cofactor.

The catalysed reaction is UMP + diphosphate = 5-phospho-alpha-D-ribose 1-diphosphate + uracil. It functions in the pathway pyrimidine metabolism; UMP biosynthesis via salvage pathway; UMP from uracil: step 1/1. Allosterically activated by GTP. Functionally, catalyzes the conversion of uracil and 5-phospho-alpha-D-ribose 1-diphosphate (PRPP) to UMP and diphosphate. This is Uracil phosphoribosyltransferase from Corynebacterium aurimucosum (strain ATCC 700975 / DSM 44827 / CIP 107346 / CN-1) (Corynebacterium nigricans).